Consider the following 284-residue polypeptide: Nucleotide-binding protein NMCC_0698 (284 aa).

8-15 (GLSGSGKS) provides a ligand contact to ATP. 58-61 (DVRS) provides a ligand contact to GTP.

It belongs to the RapZ-like family.

Its function is as follows. Displays ATPase and GTPase activities. The chain is Nucleotide-binding protein NMCC_0698 from Neisseria meningitidis serogroup C (strain 053442).